Consider the following 502-residue polypeptide: ATP synthase subunit alpha (502 aa).

169–176 (GDRQTGKT) lines the ATP pocket.

The protein belongs to the ATPase alpha/beta chains family. As to quaternary structure, F-type ATPases have 2 components, CF(1) - the catalytic core - and CF(0) - the membrane proton channel. CF(1) has five subunits: alpha(3), beta(3), gamma(1), delta(1), epsilon(1). CF(0) has three main subunits: a(1), b(2) and c(9-12). The alpha and beta chains form an alternating ring which encloses part of the gamma chain. CF(1) is attached to CF(0) by a central stalk formed by the gamma and epsilon chains, while a peripheral stalk is formed by the delta and b chains.

Its subcellular location is the cell membrane. It catalyses the reaction ATP + H2O + 4 H(+)(in) = ADP + phosphate + 5 H(+)(out). Functionally, produces ATP from ADP in the presence of a proton gradient across the membrane. The alpha chain is a regulatory subunit. The polypeptide is ATP synthase subunit alpha (Clostridium perfringens (strain SM101 / Type A)).